A 259-amino-acid chain; its full sequence is UPF0246 protein NGK_0633 (259 aa).

This sequence belongs to the UPF0246 family.

The protein is UPF0246 protein NGK_0633 of Neisseria gonorrhoeae (strain NCCP11945).